We begin with the raw amino-acid sequence, 567 residues long: MSNQMTDSTSAGSGTEHSVDTNTALKAGSPNDLKVSHEEDLNDLEKTAEETLQQKPAKEYIFVSLCCVMVAFGGFVFGWDTGTISGFVNQTDFLRRFGQEKADGSHYLSNVRTGLIVSIFNIGCAVGGIVLSNIGDRWGRRIGLITVIIIYVIGIIIQIASVDKWYQYFIGRIISGLGVGGITVLSPMLISETAPKHLRGTLVSCYQLMITFGIFLGYCTNYGTKNYSNSVQWRVPLGLCFAWAIFMVLGMMFVPESARFLVETDQIEEARKSLAKTNKVSIDDPVVKYELLKIQSSIELEKAAGNASWGELITGKPSMFRRTLMGIMIQSLQQLTGDNYFFYYGTTIFQSVGMDDSFETSIVLGIVNFASTFFALYTVDHFGRRNCLLYGCVGMVACYVVYASVGVTRLWPDGPDHPDISSKGAGNCMIVFACFYIFCFATTWAPIAYVVISESYPLRVKGKAMAIASASNWIWGFLIGFFTPFITSAIHFYYGYVFMGCMVFAFFYVYFFVPETKGLTLEEVNEMYSEGVLPWKSSSWVPSSRRGAEYDVDALQHDDKPWYKAML.

Positions 1-24 are enriched in polar residues; the sequence is MSNQMTDSTSAGSGTEHSVDTNTA. The tract at residues 1–36 is disordered; it reads MSNQMTDSTSAGSGTEHSVDTNTALKAGSPNDLKVS. Over 18–62 the chain is Cytoplasmic; sequence SVDTNTALKAGSPNDLKVSHEEDLNDLEKTAEETLQQKPAKEYIF. Residues 63–83 traverse the membrane as a helical segment; that stretch reads VSLCCVMVAFGGFVFGWDTGT. At 84–113 the chain is on the extracellular side; that stretch reads ISGFVNQTDFLRRFGQEKADGSHYLSNVRT. Asparagine 89 is a glycosylation site (N-linked (GlcNAc...) asparagine). Residues 114 to 134 form a helical membrane-spanning segment; sequence GLIVSIFNIGCAVGGIVLSNI. Over 135–141 the chain is Cytoplasmic; that stretch reads GDRWGRR. A helical transmembrane segment spans residues 142-162; it reads IGLITVIIIYVIGIIIQIASV. The Extracellular segment spans residues 163–167; the sequence is DKWYQ. The chain crosses the membrane as a helical span at residues 168–188; sequence YFIGRIISGLGVGGITVLSPM. At 189–199 the chain is on the cytoplasmic side; sequence LISETAPKHLR. Residues 200–220 traverse the membrane as a helical segment; that stretch reads GTLVSCYQLMITFGIFLGYCT. Over 221–234 the chain is Extracellular; the sequence is NYGTKNYSNSVQWR. A helical transmembrane segment spans residues 235 to 255; it reads VPLGLCFAWAIFMVLGMMFVP. Residues 256–334 lie on the Cytoplasmic side of the membrane; it reads ESARFLVETD…MGIMIQSLQQ (79 aa). A helical transmembrane segment spans residues 335 to 354; that stretch reads LTGDNYFFYYGTTIFQSVGM. Topologically, residues 355-358 are extracellular; the sequence is DDSF. Residues 359–379 traverse the membrane as a helical segment; it reads ETSIVLGIVNFASTFFALYTV. Over 380–386 the chain is Cytoplasmic; that stretch reads DHFGRRN. The helical transmembrane segment at 387 to 407 threads the bilayer; it reads CLLYGCVGMVACYVVYASVGV. At 408 to 429 the chain is on the extracellular side; sequence TRLWPDGPDHPDISSKGAGNCM. A helical transmembrane segment spans residues 430 to 450; it reads IVFACFYIFCFATTWAPIAYV. At 451–466 the chain is on the cytoplasmic side; the sequence is VISESYPLRVKGKAMA. A helical membrane pass occupies residues 467 to 487; that stretch reads IASASNWIWGFLIGFFTPFIT. Residues 488–493 lie on the Extracellular side of the membrane; it reads SAIHFY. A helical transmembrane segment spans residues 494-514; the sequence is YGYVFMGCMVFAFFYVYFFVP. Residues 515–567 lie on the Cytoplasmic side of the membrane; that stretch reads ETKGLTLEEVNEMYSEGVLPWKSSSWVPSSRRGAEYDVDALQHDDKPWYKAML.

Belongs to the major facilitator superfamily. Sugar transporter (TC 2.A.1.1) family.

It is found in the membrane. Functionally, low-affinity glucose transporter. The sequence is that of Low-affinity glucose transporter (RAG1) from Kluyveromyces lactis (strain ATCC 8585 / CBS 2359 / DSM 70799 / NBRC 1267 / NRRL Y-1140 / WM37) (Yeast).